The chain runs to 377 residues: Prolargin (377 aa).

The N-terminal stretch at 1 to 21 (MRASFFWFLPLLLILASVAQG) is a signal peptide. A disordered region spans residues 22–61 (QPRPKPGIRRKPKPRPTPSFPQPHEPAEPTDLPPPLPPGP). Pro residues-rich tracts occupy residues 36 to 45 (RPTPSFPQPH) and 52 to 61 (DLPPPLPPGP). LRR repeat units lie at residues 90–109 (RKVPIIPPRIHYLYLQNNFI), 110–133 (TELPVESFKNATGLRWINLDNNRI), 134–157 (RKVDQRVLEKLPGLAFLYMDKNQL), 158–178 (EEVPSALPRNLEQLRLSQNLI), 179–202 (SRIPPGVFSKLENLLLLDLQHNRL), 203–228 (SDGVFKADTFQGLKNLMQLNLAHNIL), 229–249 (RRMPPKVPPAIHQLYLDSNKI), 250–273 (ETIPSGYFKDFPNLAFIRMNYNKL), 274–298 (SDRGLPKNSFNISNLLVLHLSHNKI), 299–318 (SNVPAISNKLEHLYLNNNSI), 319–357 (EKINGTQICPSNLVAFHDFSSDLENVPHLRYLRLDGNFL), and 358–377 (KPPIPLDLMMCFRLLQSVVI). Asn119 is a glycosylation site (N-linked (GlcNAc...) asparagine). Residues Asn284, Asn315, and Asn322 are each glycosylated (N-linked (GlcNAc...) asparagine). Residues Cys327 and Cys368 are joined by a disulfide bond.

The protein belongs to the small leucine-rich proteoglycan (SLRP) family. SLRP class II subfamily. In terms of assembly, binds the basement membrane heparan sulfate proteoglycan perlecan and triple helical collagens type I and type II. Glycosylated; contains heparan sulfate.

The protein resides in the secreted. It is found in the extracellular space. Its subcellular location is the extracellular matrix. May anchor basement membranes to the underlying connective tissue. This chain is Prolargin (Prelp), found in Rattus norvegicus (Rat).